Here is a 334-residue protein sequence, read N- to C-terminus: UDP-N-acetylglucosamine--N-acetylmuramyl-(pentapeptide) pyrophosphoryl-undecaprenol N-acetylglucosamine transferase (334 aa).

UDP-N-acetyl-alpha-D-glucosamine-binding positions include 11–13 (TGG), Asn125, Ser185, Ile229, and Gln274.

Belongs to the glycosyltransferase 28 family. MurG subfamily.

The protein resides in the cell inner membrane. The enzyme catalyses di-trans,octa-cis-undecaprenyl diphospho-N-acetyl-alpha-D-muramoyl-L-alanyl-D-glutamyl-meso-2,6-diaminopimeloyl-D-alanyl-D-alanine + UDP-N-acetyl-alpha-D-glucosamine = di-trans,octa-cis-undecaprenyl diphospho-[N-acetyl-alpha-D-glucosaminyl-(1-&gt;4)]-N-acetyl-alpha-D-muramoyl-L-alanyl-D-glutamyl-meso-2,6-diaminopimeloyl-D-alanyl-D-alanine + UDP + H(+). The protein operates within cell wall biogenesis; peptidoglycan biosynthesis. Functionally, cell wall formation. Catalyzes the transfer of a GlcNAc subunit on undecaprenyl-pyrophosphoryl-MurNAc-pentapeptide (lipid intermediate I) to form undecaprenyl-pyrophosphoryl-MurNAc-(pentapeptide)GlcNAc (lipid intermediate II). In Thermosipho melanesiensis (strain DSM 12029 / CIP 104789 / BI429), this protein is UDP-N-acetylglucosamine--N-acetylmuramyl-(pentapeptide) pyrophosphoryl-undecaprenol N-acetylglucosamine transferase.